The following is a 258-amino-acid chain: uncharacterized protein (258 aa).

NADP(+) contacts are provided by isoleucine 17, aspartate 53, asparagine 80, arginine 113, tyrosine 145, lysine 149, isoleucine 178, and serine 180. The Proton donor role is filled by tyrosine 145. The active-site Lowers pKa of active site Tyr is the lysine 149.

This sequence belongs to the short-chain dehydrogenases/reductases (SDR) family.

Its subcellular location is the cytoplasm. The protein localises to the nucleus. This is an uncharacterized protein from Schizosaccharomyces pombe (strain 972 / ATCC 24843) (Fission yeast).